The following is a 104-amino-acid chain: L-rhamnose mutarotase (104 aa).

Tyr18 is a binding site for substrate. His22 (proton donor) is an active-site residue. Residues Tyr41 and 76–77 (WW) contribute to the substrate site.

Belongs to the rhamnose mutarotase family. In terms of assembly, homodimer.

It is found in the cytoplasm. It carries out the reaction alpha-L-rhamnose = beta-L-rhamnose. It participates in carbohydrate metabolism; L-rhamnose metabolism. In terms of biological role, involved in the anomeric conversion of L-rhamnose. This chain is L-rhamnose mutarotase, found in Salmonella newport (strain SL254).